The sequence spans 355 residues: Cytoplasmic tRNA 2-thiolation protein 1 (355 aa).

The interval 320 to 341 is disordered; sequence GIGRPRGVNGDHNKETKKPGSV. Residues 328–337 show a composition bias toward basic and acidic residues; sequence NGDHNKETKK.

This sequence belongs to the TtcA family. CTU1/NCS6/ATPBD3 subfamily.

It localises to the cytoplasm. It participates in tRNA modification; 5-methoxycarbonylmethyl-2-thiouridine-tRNA biosynthesis. Plays a central role in 2-thiolation of mcm(5)S(2)U at tRNA wobble positions of tRNA(Lys), tRNA(Glu) and tRNA(Gln). Directly binds tRNAs and probably acts by catalyzing adenylation of tRNAs, an intermediate required for 2-thiolation. It is unclear whether it acts as a sulfurtransferase that transfers sulfur from thiocarboxylated URM1 onto the uridine of tRNAs at wobble position. The polypeptide is Cytoplasmic tRNA 2-thiolation protein 1 (Arabidopsis thaliana (Mouse-ear cress)).